The sequence spans 136 residues: Large ribosomal subunit protein uL16c (136 aa).

The protein belongs to the universal ribosomal protein uL16 family. In terms of assembly, part of the 50S ribosomal subunit.

It localises to the plastid. The protein localises to the chloroplast. This Illicium oligandrum (Star anise) protein is Large ribosomal subunit protein uL16c.